Here is a 158-residue protein sequence, read N- to C-terminus: uncharacterized protein (158 aa).

The next 2 membrane-spanning stretches (helical) occupy residues 66–86 (LLIIVAVLFPPLYISGLPWIM) and 94–114 (FFSLSITSFIMVPFLLISLTI).

It localises to the membrane. This is an uncharacterized protein from Saccharomyces cerevisiae (strain ATCC 204508 / S288c) (Baker's yeast).